Reading from the N-terminus, the 231-residue chain is Biosynthetic peptidoglycan transglycosylase (231 aa).

A helical transmembrane segment spans residues 10 to 30 (LLLLGLIGLFLVWQLWLLGWV).

This sequence belongs to the glycosyltransferase 51 family.

Its subcellular location is the cell inner membrane. The catalysed reaction is [GlcNAc-(1-&gt;4)-Mur2Ac(oyl-L-Ala-gamma-D-Glu-L-Lys-D-Ala-D-Ala)](n)-di-trans,octa-cis-undecaprenyl diphosphate + beta-D-GlcNAc-(1-&gt;4)-Mur2Ac(oyl-L-Ala-gamma-D-Glu-L-Lys-D-Ala-D-Ala)-di-trans,octa-cis-undecaprenyl diphosphate = [GlcNAc-(1-&gt;4)-Mur2Ac(oyl-L-Ala-gamma-D-Glu-L-Lys-D-Ala-D-Ala)](n+1)-di-trans,octa-cis-undecaprenyl diphosphate + di-trans,octa-cis-undecaprenyl diphosphate + H(+). Its pathway is cell wall biogenesis; peptidoglycan biosynthesis. In terms of biological role, peptidoglycan polymerase that catalyzes glycan chain elongation from lipid-linked precursors. The protein is Biosynthetic peptidoglycan transglycosylase of Dechloromonas aromatica (strain RCB).